The following is a 470-amino-acid chain: Ribulose bisphosphate carboxylase large chain (470 aa).

Residues Asn-115 and Thr-165 each coordinate substrate. The Proton acceptor role is filled by Lys-167. Residue Lys-169 participates in substrate binding. Positions 193, 195, and 196 each coordinate Mg(2+). At Lys-193 the chain carries N6-carboxylysine. His-286 acts as the Proton acceptor in catalysis. Positions 287, 319, and 371 each coordinate substrate.

The protein belongs to the RuBisCO large chain family. Type I subfamily. As to quaternary structure, heterohexadecamer of 8 large chains and 8 small chains. Mg(2+) is required as a cofactor.

Its subcellular location is the carboxysome. The enzyme catalyses 2 (2R)-3-phosphoglycerate + 2 H(+) = D-ribulose 1,5-bisphosphate + CO2 + H2O. It catalyses the reaction D-ribulose 1,5-bisphosphate + O2 = 2-phosphoglycolate + (2R)-3-phosphoglycerate + 2 H(+). RuBisCO catalyzes two reactions: the carboxylation of D-ribulose 1,5-bisphosphate, the primary event in carbon dioxide fixation, as well as the oxidative fragmentation of the pentose substrate in the photorespiration process. Both reactions occur simultaneously and in competition at the same active site. This chain is Ribulose bisphosphate carboxylase large chain, found in Synechococcus sp. (strain CC9311).